The following is a 177-amino-acid chain: Large ribosomal subunit protein uL6 (177 aa).

This sequence belongs to the universal ribosomal protein uL6 family. In terms of assembly, part of the 50S ribosomal subunit.

This protein binds to the 23S rRNA, and is important in its secondary structure. It is located near the subunit interface in the base of the L7/L12 stalk, and near the tRNA binding site of the peptidyltransferase center. This chain is Large ribosomal subunit protein uL6, found in Pseudoalteromonas atlantica (strain T6c / ATCC BAA-1087).